Reading from the N-terminus, the 597-residue chain is Probable translation initiation factor IF-2 (597 aa).

The 218-residue stretch at 8-225 folds into the tr-type G domain; that stretch reads LRQPIVVVLG…LLAGLTQQYL (218 aa). The interval 17–24 is G1; sequence GHVDHGKT. Residue 17–24 coordinates GTP; sequence GHVDHGKT. Positions 42-46 are G2; sequence EMTQE. Residues 81–84 are G3; sequence DTPG. GTP-binding positions include 81–85 and 135–138; these read DTPGH and NKID. The G4 stretch occupies residues 135–138; the sequence is NKID. The interval 203–205 is G5; that stretch reads SGK.

Belongs to the TRAFAC class translation factor GTPase superfamily. Classic translation factor GTPase family. IF-2 subfamily.

Its function is as follows. Function in general translation initiation by promoting the binding of the formylmethionine-tRNA to ribosomes. Seems to function along with eIF-2. This chain is Probable translation initiation factor IF-2, found in Metallosphaera sedula (strain ATCC 51363 / DSM 5348 / JCM 9185 / NBRC 15509 / TH2).